The following is a 627-amino-acid chain: Transketolase-like protein 2 (627 aa).

Residue His39 participates in substrate binding. Residues Ser42, His79, and 125-127 (GSL) each bind thiamine diphosphate. Asp157 is a binding site for Mg(2+). 2 residues coordinate thiamine diphosphate: Gly158 and Asn187. The Mg(2+) site is built by Asn187 and Leu189. Thiamine diphosphate-binding residues include Lys249 and His263. Substrate contacts are provided by His263, Arg323, and Ser350. Residues Glu371 and Phe397 each contribute to the thiamine diphosphate site. Glu371 (proton donor) is an active-site residue. Positions 421 and 429 each coordinate substrate. A thiamine diphosphate-binding site is contributed by Gln433. Position 479 (Arg479) interacts with substrate.

This sequence belongs to the transketolase family. Homodimer. Mg(2+) is required as a cofactor. The cofactor is Ca(2+). Requires Mn(2+) as cofactor. Co(2+) serves as cofactor. It depends on thiamine diphosphate as a cofactor.

It carries out the reaction D-sedoheptulose 7-phosphate + D-glyceraldehyde 3-phosphate = aldehydo-D-ribose 5-phosphate + D-xylulose 5-phosphate. In terms of biological role, plays an essential role in total transketolase activity and cell proliferation in cancer cells; after transfection with anti-TKTL1 siRNA, total transketolase activity dramatically decreases and proliferation was significantly inhibited in cancer cells. Plays a pivotal role in carcinogenesis. In Mus musculus (Mouse), this protein is Transketolase-like protein 2 (Tktl2).